Here is a 173-residue protein sequence, read N- to C-terminus: Inorganic pyrophosphatase (173 aa).

The substrate site is built by Lys29, Arg43, and Tyr55. Asp65, Asp70, and Asp102 together coordinate Mg(2+). Position 141 (Tyr141) interacts with substrate.

It belongs to the PPase family. As to quaternary structure, homohexamer. Mg(2+) is required as a cofactor.

The protein resides in the cytoplasm. It carries out the reaction diphosphate + H2O = 2 phosphate + H(+). In terms of biological role, catalyzes the hydrolysis of inorganic pyrophosphate (PPi) forming two phosphate ions. The protein is Inorganic pyrophosphatase of Gluconobacter oxydans (strain 621H) (Gluconobacter suboxydans).